Reading from the N-terminus, the 276-residue chain is F-box/LRR-repeat protein 20 (276 aa).

Residues 22-68 form the F-box domain; the sequence is AVINKKLPKELLLRIFSFLDVVTLCRCAQVSRAWNVLALDGSNWQRI. LRR repeat units follow at residues 74-100, 101-126, 127-152, 153-178, 179-204, 205-230, 231-256, and 257-276; these read QRDI…SLRG, CLGV…SLNG, CTKT…DLAS, CTSI…NISW, CDQV…FLKG, CTQL…NLQT, CLQI…CASG, and CSNI…PRLR.

As to quaternary structure, interacts with SKP1 and CUL1. As to expression, widely expressed, with highest expression in skeletal muscle, heart and brain.

It localises to the cytoplasm. In terms of biological role, substrate-recognition component of the SCF (SKP1-CUL1-F-box protein)-type E3 ubiquitin ligase complex. Role in neural transmission. The protein is F-box/LRR-repeat protein 20 (Fbxl20) of Rattus norvegicus (Rat).